A 462-amino-acid chain; its full sequence is Probable peptidoglycan glycosyltransferase FtsW (462 aa).

Residues Met1–Lys28 are disordered. Topologically, residues Met1 to Ser92 are cytoplasmic. Basic residues predominate over residues Ser13–Gly27. Residues Leu93–Ile113 traverse the membrane as a helical segment. Residues Ala114–Tyr127 are Periplasmic-facing. Residues Ala128–Phe148 form a helical membrane-spanning segment. Over Arg149–Tyr158 the chain is Cytoplasmic. The helical transmembrane segment at Ala159–Gly179 threads the bilayer. The Periplasmic portion of the chain corresponds to Lys180–Gly192. The chain crosses the membrane as a helical span at residues Ile193 to Val215. The Cytoplasmic portion of the chain corresponds to Arg216–Ser223. A helical transmembrane segment spans residues Phe224–Leu244. The Periplasmic portion of the chain corresponds to Glu245–Asp247. Residues Met248–Asn268 form a helical membrane-spanning segment. The Cytoplasmic portion of the chain corresponds to Gly269 to Lys270. The chain crosses the membrane as a helical span at residues Leu271–Pro291. The Periplasmic segment spans residues Trp292–Asp349. A helical transmembrane segment spans residues Phe350 to Leu370. The Cytoplasmic portion of the chain corresponds to Phe371 to Lys398. The helical transmembrane segment at Gly399–Leu419 threads the bilayer. Residues Pro420–Thr425 lie on the Periplasmic side of the membrane. The helical transmembrane segment at Leu426–Leu446 threads the bilayer. Over Leu447 to Val462 the chain is Cytoplasmic.

Belongs to the SEDS family. FtsW subfamily.

It localises to the cell inner membrane. The enzyme catalyses [GlcNAc-(1-&gt;4)-Mur2Ac(oyl-L-Ala-gamma-D-Glu-L-Lys-D-Ala-D-Ala)](n)-di-trans,octa-cis-undecaprenyl diphosphate + beta-D-GlcNAc-(1-&gt;4)-Mur2Ac(oyl-L-Ala-gamma-D-Glu-L-Lys-D-Ala-D-Ala)-di-trans,octa-cis-undecaprenyl diphosphate = [GlcNAc-(1-&gt;4)-Mur2Ac(oyl-L-Ala-gamma-D-Glu-L-Lys-D-Ala-D-Ala)](n+1)-di-trans,octa-cis-undecaprenyl diphosphate + di-trans,octa-cis-undecaprenyl diphosphate + H(+). It functions in the pathway cell wall biogenesis; peptidoglycan biosynthesis. Peptidoglycan polymerase that is essential for cell division. The chain is Probable peptidoglycan glycosyltransferase FtsW from Burkholderia thailandensis (strain ATCC 700388 / DSM 13276 / CCUG 48851 / CIP 106301 / E264).